Reading from the N-terminus, the 337-residue chain is tRNA N6-adenosine threonylcarbamoyltransferase (337 aa).

Positions 111 and 115 each coordinate Fe cation. Residues 134–138, Asp-167, Gly-180, and Asn-272 each bind substrate; that span reads LVSGG. Asp-300 serves as a coordination point for Fe cation.

It belongs to the KAE1 / TsaD family. Fe(2+) is required as a cofactor.

It localises to the cytoplasm. It catalyses the reaction L-threonylcarbamoyladenylate + adenosine(37) in tRNA = N(6)-L-threonylcarbamoyladenosine(37) in tRNA + AMP + H(+). Required for the formation of a threonylcarbamoyl group on adenosine at position 37 (t(6)A37) in tRNAs that read codons beginning with adenine. Is involved in the transfer of the threonylcarbamoyl moiety of threonylcarbamoyl-AMP (TC-AMP) to the N6 group of A37, together with TsaE and TsaB. TsaD likely plays a direct catalytic role in this reaction. This chain is tRNA N6-adenosine threonylcarbamoyltransferase, found in Escherichia coli O139:H28 (strain E24377A / ETEC).